The chain runs to 1684 residues: Protein Wiz (1684 aa).

Positions 1–77 are disordered; that stretch reads MEGLLAGGLA…PGLSEALPRA (77 aa). Positions 13-24 are enriched in basic and acidic residues; sequence DHPRGPAPREDI. 5 C2H2-type zinc fingers span residues 308 to 330, 345 to 367, 454 to 477, 734 to 756, and 802 to 824; these read FPCI…MSQH, LACS…WQLH, NTCV…RLVH, RKCP…VRGH, and MRCD…ARAH. The segment at 854-876 is disordered; sequence LPPSPLGREPGGPPRSFLTSRRP. Residues 903–925 form a C2H2-type 6 zinc finger; it reads TTCEVCGACFETRKGLSSHARSH. Residues K916, K972, K988, K1000, and K1021 each participate in a glycyl lysine isopeptide (Lys-Gly) (interchain with G-Cter in SUMO2) cross-link. Positions 1005 to 1072 are disordered; it reads FSAKGLTHPS…PLNLTSGPEP (68 aa). At S1029 the chain carries Phosphoserine. T1031 carries the phosphothreonine modification. Glycyl lysine isopeptide (Lys-Gly) (interchain with G-Cter in SUMO2) cross-links involve residues K1033 and K1038. Phosphoserine occurs at positions 1039 and 1045. The segment covering 1040–1057 has biased composition (polar residues); the sequence is PQLSLSPRPTSPKAQWPQ. Residue T1049 is modified to Phosphothreonine. Residues S1050 and S1058 each carry the phosphoserine modification. Residues 1063-1067 form an interaction with CTBP1 and CTBP2 1 region; that stretch reads PLNLT. Residues 1076-1098 form a C2H2-type 7 zinc finger; that stretch reads IRCEFCGEFFENRKGLSSHARSH. Residue K1089 forms a Glycyl lysine isopeptide (Lys-Gly) (interchain with G-Cter in SUMO2) linkage. 2 positions are modified to phosphoserine: S1112 and S1139. The interval 1127 to 1208 is disordered; that stretch reads SRPGGHLHPP…GLATPSLPKK (82 aa). Residues K1141 and K1145 each participate in a glycyl lysine isopeptide (Lys-Gly) (interchain with G-Cter in SUMO2) cross-link. S1155, S1160, and S1167 each carry phosphoserine. Glycyl lysine isopeptide (Lys-Gly) (interchain with G-Cter in SUMO2) cross-links involve residues K1171 and K1172. S1179 and S1184 each carry phosphoserine. K1195 carries the post-translational modification N6,N6,N6-trimethyllysine; by EHMT2; alternate. Position 1195 is an N6,N6-dimethyllysine; by EHMT2; alternate (K1195). K1210 is covalently cross-linked (Glycyl lysine isopeptide (Lys-Gly) (interchain with G-Cter in SUMO2)). An interaction with CTBP1 and CTBP2 2 region spans residues 1247–1251; it reads PLNLS. The segment at 1260-1282 adopts a C2H2-type 8 zinc-finger fold; that stretch reads IRCEFCGEFFENRKGLSSHARSH. A Glycyl lysine isopeptide (Lys-Gly) (interchain with G-Cter in SUMO2) cross-link involves residue K1273. A Phosphoserine modification is found at S1296. K1315 participates in a covalent cross-link: Glycyl lysine isopeptide (Lys-Gly) (interchain with G-Cter in SUMO2). Positions 1320–1384 are disordered; that stretch reads AGDLAPALTE…SKPSAASYLG (65 aa). Over residues 1335–1351 the composition is skewed to low complexity; it reads AAPGALHSPLPLSPLAS. Residues S1342 and S1347 each carry the phosphoserine modification. Glycyl lysine isopeptide (Lys-Gly) (interchain with G-Cter in SUMO2) cross-links involve residues K1376, K1389, K1403, K1405, and K1415. The C2H2-type 9 zinc finger occupies 1430 to 1452; that stretch reads ACCELCGLYFENRKALASHARAH. Glycyl lysine isopeptide (Lys-Gly) (interchain with G-Cter in SUMO2) cross-links involve residues K1481, K1497, and K1510. Disordered stretches follow at residues 1496 to 1587 and 1592 to 1611; these read TKKF…GEEV and QKLE…PSLV. At S1550 the chain carries Phosphoserine. A Glycyl lysine isopeptide (Lys-Gly) (interchain with G-Cter in SUMO1); alternate cross-link involves residue K1556. Residue K1556 forms a Glycyl lysine isopeptide (Lys-Gly) (interchain with G-Cter in SUMO2); alternate linkage. The segment covering 1556-1574 has biased composition (basic and acidic residues); it reads KSEEHQRQNINKFERRQAR. Residues K1567 and K1593 each participate in a glycyl lysine isopeptide (Lys-Gly) (interchain with G-Cter in SUMO2) cross-link. Positions 1599-1611 are enriched in pro residues; it reads QPPPRVRPVPSLV. Residues 1629 to 1655 form a C2H2-type 10 zinc finger; the sequence is LKCRFCEVEFQGPLSIQEEWVRHLQRH. The segment at 1662 to 1684 is disordered; it reads SKADPPPEEPQAPQAQTAAVEAP. Residue K1663 forms a Glycyl lysine isopeptide (Lys-Gly) (interchain with G-Cter in SUMO2) linkage. Low complexity predominate over residues 1672 to 1684; the sequence is QAPQAQTAAVEAP.

Belongs to the krueppel C2H2-type zinc-finger protein family. In terms of assembly, part of a complex containing at least CDYL, REST, WIZ, SETB1, EHMT1 and EHMT2. Interacts with EHMT1, EHMT2, CTBP1 and CTBP2. As to expression, according to PubMed:9795207, isoform L and isoform S are brain-specific. According to PubMed:16702210, isoform S is ubiquitously expressed.

The protein localises to the nucleus. In terms of biological role, may link EHMT1 and EHMT2 histone methyltransferases to the CTBP corepressor machinery. May be involved in EHMT1-EHMT2 heterodimer formation and stabilization. This Mus musculus (Mouse) protein is Protein Wiz (Wiz).